Consider the following 852-residue polypeptide: Taste receptor type 1 member 3 (852 aa).

The first 20 residues, 1–20, serve as a signal peptide directing secretion; that stretch reads MLGPAVLGLSLWALLQPGAG. Topologically, residues 21-570 are extracellular; that stretch reads APLCLSQQLR…FLAWGEPAVL (550 aa). N-linked (GlcNAc...) asparagine glycans are attached at residues Asn85, Asn130, Asn264, Asn285, Asn380, Asn411, Asn432, and Asn475. The helical transmembrane segment at 571–591 threads the bilayer; that stretch reads LLLLLLSLALGLVLAALGLFV. At 592–603 the chain is on the cytoplasmic side; sequence HHRDSPLVQASG. A helical membrane pass occupies residues 604-624; that stretch reads GPLACFGLVCLGLVCLSVLLF. Topologically, residues 625–639 are extracellular; sequence PGQPSPAQCLAQQPL. A helical transmembrane segment spans residues 640–660; the sequence is SHLPLTGCLSTLFLQAAEIFV. Topologically, residues 661–682 are cytoplasmic; it reads ESELPLSWADRLSGCLRGPWAW. A helical membrane pass occupies residues 683-703; sequence LVVLLAMLVEVALCTWYLVAF. Topologically, residues 704-729 are extracellular; the sequence is PPEVVTDWHMLPTEALVHCRTRSWVS. Residues 730-750 traverse the membrane as a helical segment; that stretch reads FGLAHATNATLAFLCFLGTFL. At 751–762 the chain is on the cytoplasmic side; the sequence is VRSQPGRYNRAR. A helical membrane pass occupies residues 763-783; that stretch reads GLTFAMLAYFITWVSFVPLLA. Over 784 to 791 the chain is Extracellular; sequence NVQVVLRP. Residues 792-812 traverse the membrane as a helical segment; it reads AVQMGALLLCVLGILAAFHLP. The Cytoplasmic segment spans residues 813 to 852; that stretch reads RCYLLIRQPGLNTPEFFLGGGPGDAQGRNDGDTGNQGKHE. The disordered stretch occupies residues 833-852; it reads GPGDAQGRNDGDTGNQGKHE. A compositionally biased stretch (basic and acidic residues) spans 839-852; that stretch reads GRNDGDTGNQGKHE.

This sequence belongs to the G-protein coupled receptor 3 family. TAS1R subfamily. As to quaternary structure, forms homodimers or heterodimers with TAS1R1 and TAS1R2.

The protein localises to the cell membrane. Putative taste receptor. TAS1R1/TAS1R3 responds to the umami taste stimulus (the taste of monosodium glutamate). TAS1R2/TAS1R3 recognizes diverse natural and synthetic sweeteners. TAS1R3 is essential for the recognition and response to the disaccharide trehalose. Sequence differences within and between species can significantly influence the selectivity and specificity of taste responses. This chain is Taste receptor type 1 member 3 (TAS1R3), found in Gorilla gorilla gorilla (Western lowland gorilla).